The chain runs to 248 residues: Tabinhibitin 10 (248 aa).

Positions 1 to 22 are cleaved as a signal peptide; the sequence is MTLKRIFCAALALIVLQSVASA. Positions 66–208 constitute an SCP domain; that stretch reads LQKTNWLRGV…NYKGAFHCSL (143 aa). The Cell attachment site signature appears at 221 to 223; it reads RGD.

Belongs to the CRISP family. Expressed in salivary glands.

It is found in the secreted. Its function is as follows. Inhibits platelet aggregation induced by all agonists tested (ADP, arachidonic acid, the thromboxane A2 analog U46619, thrombin, and snake venom snaclecs (TMVA that activates platelet through GPIB, and stejnulxin that specifically acts through GPVI (GP6))). May act by competing with fibrinogen for binding to glycoprotein IIb/IIIa (ITGA2B/ITGB3). The chain is Tabinhibitin 10 from Tabanus yao (Horsefly).